The primary structure comprises 266 residues: Small ribosomal subunit protein uS2 (266 aa).

The segment at 233–266 (AVREEEFASAPDAGKKGRQAQPKKGKRASDAAAE) is disordered. Positions 248 to 258 (KGRQAQPKKGK) are enriched in basic residues.

The protein belongs to the universal ribosomal protein uS2 family.

This is Small ribosomal subunit protein uS2 from Xylella fastidiosa (strain M23).